We begin with the raw amino-acid sequence, 446 residues long: Na(+)-translocating NADH-quinone reductase subunit A (446 aa).

The protein belongs to the NqrA family. In terms of assembly, composed of six subunits; NqrA, NqrB, NqrC, NqrD, NqrE and NqrF.

The enzyme catalyses a ubiquinone + n Na(+)(in) + NADH + H(+) = a ubiquinol + n Na(+)(out) + NAD(+). Its function is as follows. NQR complex catalyzes the reduction of ubiquinone-1 to ubiquinol by two successive reactions, coupled with the transport of Na(+) ions from the cytoplasm to the periplasm. NqrA to NqrE are probably involved in the second step, the conversion of ubisemiquinone to ubiquinol. The sequence is that of Na(+)-translocating NADH-quinone reductase subunit A from Vibrio parahaemolyticus serotype O3:K6 (strain RIMD 2210633).